The sequence spans 540 residues: Beta-glucosidase 1B (540 aa).

Substrate is bound by residues Q25, H128, and N174. The active-site Proton donor is the E175. Y316 contacts substrate. The active-site Nucleophile is E380. Residues W430 and 437-438 (EW) each bind substrate. The span at 481–492 (PAAETKKAATPS) shows a compositional bias: low complexity. The segment at 481 to 524 (PAAETKKAATPSPLKPHGAISNGVSKKSSATKEPKSASRKKGRK) is disordered.

It belongs to the glycosyl hydrolase 1 family.

It catalyses the reaction Hydrolysis of terminal, non-reducing beta-D-glucosyl residues with release of beta-D-glucose.. Its function is as follows. Plays an important role in cellulose degradation. Shows hydrolytic activity against several glycosidic compounds. This is Beta-glucosidase 1B from Phanerodontia chrysosporium (White-rot fungus).